The primary structure comprises 148 residues: Azurin (148 aa).

A signal peptide spans 1-18 (MRNQLLFALAFIPTIAAA). The 130-residue stretch at 19–148 (ASNCEVNVSA…MMRGTVKLVD (130 aa)) folds into the Plastocyanin-like domain. The cysteines at positions 22 and 45 are disulfide-linked. Cu cation contacts are provided by His65, Cys131, His136, and Met140.

Its subcellular location is the periplasm. The protein operates within one-carbon metabolism; methylamine degradation. Probable electron acceptor for methylamine dehydrogenase. The polypeptide is Azurin (azu) (Methylobacillus flagellatus (strain ATCC 51484 / DSM 6875 / VKM B-1610 / KT)).